Here is a 277-residue protein sequence, read N- to C-terminus: Glycerol-3-phosphate acyltransferase (277 aa).

5 helical membrane-spanning segments follow: residues phenylalanine 3 to valine 23, isoleucine 55 to leucine 75, proline 79 to phenylalanine 99, isoleucine 111 to leucine 131, and leucine 155 to leucine 175. A disordered region spans residues lysine 231–glutamate 277. Composition is skewed to basic residues over residues lysine 240 to threonine 253 and lysine 262 to lysine 271.

It belongs to the PlsY family. Probably interacts with PlsX.

The protein localises to the cell inner membrane. The enzyme catalyses an acyl phosphate + sn-glycerol 3-phosphate = a 1-acyl-sn-glycero-3-phosphate + phosphate. The protein operates within lipid metabolism; phospholipid metabolism. Catalyzes the transfer of an acyl group from acyl-phosphate (acyl-PO(4)) to glycerol-3-phosphate (G3P) to form lysophosphatidic acid (LPA). This enzyme utilizes acyl-phosphate as fatty acyl donor, but not acyl-CoA or acyl-ACP. The chain is Glycerol-3-phosphate acyltransferase from Legionella pneumophila (strain Lens).